The following is a 729-amino-acid chain: Neurochondrin (729 aa).

Position 2 is an N-acetylserine (Ser-2). Position 2 is a phosphoserine (Ser-2). N-acetylalanine is present on Ser-2. 2 S-palmitoyl cysteine lipidation sites follow: Cys-3 and Cys-4. At Arg-75 the chain carries Asymmetric dimethylarginine. Ser-448 bears the Phosphoserine mark.

The protein belongs to the neurochondrin family. In terms of assembly, interacts with MCHR1. Interacts with SEMA4C. Interacts with DIAPH1 (via FH3 domain). Interacts with GRM5. Palmitoylated. Palmitoylation by ZDHHC1, ZDHHC3 and ZDHHC11 regulates the association of NCDN with endosome membranes. May also be palmitoylated by ZDHHC7. Abundantly expressed in whole adult brain and in all individual brain regions examined, including spinal cord. Weakly expressed in ovary, testis, fetal brain and small intestine.

The protein localises to the cytoplasm. It is found in the cytosol. It localises to the endosome membrane. The protein resides in the cell projection. Its subcellular location is the dendrite. The protein localises to the postsynapse. Its function is as follows. Probably involved in signal transduction in the nervous system, via increasing cell surface localization of GRM5/mGluR5 and positively regulating its signaling. Required for the spatial learning process. Acts as a negative regulator of Ca(2+)-calmodulin-dependent protein kinase 2 (CaMK2) phosphorylation. May play a role in modulating melanin-concentrating hormone-mediated functions via its interaction with MCHR1 that interferes with G protein-coupled signal transduction. May be involved in bone metabolism. May also be involved in neurite outgrowth. The sequence is that of Neurochondrin from Homo sapiens (Human).